A 189-amino-acid chain; its full sequence is GTPase KRas (189 aa).

Methionine 1 carries the post-translational modification N-acetylmethionine. Threonine 2 carries the post-translational modification N-acetylthreonine; in GTPase KRas, N-terminally processed. Residues 10–18 (GAGGVGKSA), 29–35 (VDEYDPT), and 59–60 (AG) each bind GTP. Positions 32–40 (YDPTIEDSY) match the Effector region motif. Lysine 104 bears the N6-acetyllysine mark. 116–119 (NKCD) contacts GTP. The interval 166–185 (YRLKKISKEEKTPGCVKIKK) is hypervariable region. Lysine 170 is covalently cross-linked (Glycyl lysine isopeptide (Lys-Gly) (interchain with G-Cter in ubiquitin)). A lipid anchor (S-palmitoyl cysteine) is attached at cysteine 180. Residues lysine 182, lysine 184, and lysine 185 are each lipidated (N6-palmitoyl lysine). The residue at position 186 (cysteine 186) is a Cysteine methyl ester. A lipid anchor (S-farnesyl cysteine) is attached at cysteine 186. The propeptide at 187–189 (VIM) is removed in mature form.

It belongs to the small GTPase superfamily. Ras family. Interacts with PHLPP. Interacts (active GTP-bound form preferentially) with RGS14. Interacts (when farnesylated) with PDE6D; this promotes dissociation from the cell membrane. Interacts with SOS1. Interacts (when farnesylated) with GPR31. Interacts with RAP1GDS1. Interacts (active GTP-bound form) with both SHOC2 and PP1c (all isoforms) to form a tertiary complex; SHOC2 and PP1c preferably bind M-Ras/MRAS, but they also bind K-Ras/KRAS, N-Ras/NRAS and H-Ras/HRAS. Interacts (GTP-bound form) with MAPKAP1/SIN1; inhibiting K-Ras/KRAS activity. As to quaternary structure, interacts (when farnesylated) with GPR31. Post-translationally, acetylation at Lys-104 prevents interaction with guanine nucleotide exchange factors (GEFs). In terms of processing, ubiquitinated by the BCR(LZTR1) E3 ubiquitin ligase complex at Lys-170 in a non-degradative manner, leading to inhibit Ras signaling by decreasing Ras association with membranes. Palmitoylated at Lys-182, Lys-184 and Lys-185. Lysine-depalmitoylation by SIRT2 promotes its localization to endomembranes in endocytic pathways.

The protein localises to the cell membrane. Its subcellular location is the endomembrane system. It localises to the cytoplasm. The protein resides in the cytosol. It carries out the reaction GTP + H2O = GDP + phosphate + H(+). Alternates between an inactive form bound to GDP and an active form bound to GTP. Activated by a guanine nucleotide-exchange factor (GEF) and inactivated by a GTPase-activating protein (GAP). Interaction with SOS1 promotes exchange of bound GDP to GTP. Ras proteins bind GDP/GTP and possess intrinsic GTPase activity. Plays an important role in the regulation of cell proliferation. Plays a role in promoting oncogenic events by inducing transcriptional silencing of tumor suppressor genes (TSGs) in colorectal cancer (CRC) cells in a ZNF304-dependent manner. The protein is GTPase KRas (Kras) of Rattus norvegicus (Rat).